The chain runs to 1247 residues: Nidogen-1 (1247 aa).

The signal sequence occupies residues 1 to 28; it reads MLASSSRIRAAWTRALLLPLLLAGPVGC. The region spanning 106 to 268 is the NIDO domain; it reads PFLADLDTTD…GVWVFEIGSP (163 aa). Tyr-289 and Tyr-296 each carry sulfotyrosine. Residues 386-426 enclose the EGF-like 1 domain; it reads SRQTCANNRHQCSVHAECRDYATGFCCSCVAGYTGNGRQCV. Disulfide bonds link Cys-390-Cys-403, Cys-397-Cys-412, Cys-411-Cys-618, Cys-414-Cys-425, Cys-672-Cys-685, Cys-679-Cys-695, Cys-697-Cys-708, Cys-714-Cys-727, Cys-721-Cys-736, Cys-738-Cys-750, Cys-762-Cys-777, Cys-769-Cys-787, Cys-789-Cys-800, Cys-806-Cys-817, Cys-811-Cys-826, Cys-828-Cys-839, Cys-849-Cys-878, Cys-889-Cys-896, and Cys-898-Cys-919. The Nidogen G2 beta-barrel domain maps to 430–667; that stretch reads SPQRVNGKVK…GPVREGSPDA (238 aa). Residues 668 to 709 form the EGF-like 2 domain; that stretch reads LQNPCYIGTHGCDTNAACRPGPRTQFTCECSIGFRGDGRTCY. The short motif at 702 to 704 is the Cell attachment site element; the sequence is RGD. An EGF-like 3; calcium-binding domain is found at 710–751; that stretch reads DIDECSEQPSVCGSHTICNNHPGTFRCECVEGYQFSDEGTCV. Residues 758-801 enclose the EGF-like 4 domain; sequence PINYCETGLHNCDIPQRAQCIYTGGSSYTCSCLPGFSGDGQACQ. The 39-residue stretch at 802–840 folds into the EGF-like 5; calcium-binding domain; that stretch reads DVDECQPSRCHPDAFCYNTPGSFTCQCKPGYQGDGFRCV. One can recognise a Thyroglobulin type-1 domain in the interval 846–919; the sequence is KTRCQHEREH…RTRPGMTPPC (74 aa). O-linked (GalNAc...) threonine glycans are attached at residues Thr-922 and Thr-935. 4 LDL-receptor class B repeats span residues 990–1032, 1033–1075, 1076–1120, and 1121–1162; these read KMVY…DHLG, RNIF…DSVR, GNLY…DAFS, and SQLC…YGKN. An EGF-like 6 domain is found at 1208-1244; that stretch reads GHNYCSVNNGGCTHLCLATPGSRTCRCPDNTLGVDCI. Disulfide bonds link Cys-1212/Cys-1223, Cys-1219/Cys-1232, and Cys-1234/Cys-1243.

As to quaternary structure, interacts with FBLN1. Interacts with LGALS3BP. Interacts with PLXDC1. Interacts with SVEP1. In terms of processing, N- and O-glycosylated.

It localises to the secreted. Its subcellular location is the extracellular space. The protein resides in the extracellular matrix. The protein localises to the basement membrane. Sulfated glycoprotein widely distributed in basement membranes and tightly associated with laminin. Also binds to collagen IV and perlecan. It probably has a role in cell-extracellular matrix interactions. The sequence is that of Nidogen-1 (NID1) from Homo sapiens (Human).